Here is a 303-residue protein sequence, read N- to C-terminus: Aspartate carbamoyltransferase catalytic subunit (303 aa).

Residues arginine 49 and threonine 50 each contribute to the carbamoyl phosphate site. Lysine 77 provides a ligand contact to L-aspartate. Carbamoyl phosphate-binding residues include arginine 99, histidine 126, and glutamine 129. The L-aspartate site is built by arginine 159 and arginine 211. Residues serine 252 and proline 253 each contribute to the carbamoyl phosphate site.

This sequence belongs to the aspartate/ornithine carbamoyltransferase superfamily. ATCase family. Heterododecamer (2C3:3R2) of six catalytic PyrB chains organized as two trimers (C3), and six regulatory PyrI chains organized as three dimers (R2).

It catalyses the reaction carbamoyl phosphate + L-aspartate = N-carbamoyl-L-aspartate + phosphate + H(+). It participates in pyrimidine metabolism; UMP biosynthesis via de novo pathway; (S)-dihydroorotate from bicarbonate: step 2/3. Functionally, catalyzes the condensation of carbamoyl phosphate and aspartate to form carbamoyl aspartate and inorganic phosphate, the committed step in the de novo pyrimidine nucleotide biosynthesis pathway. The sequence is that of Aspartate carbamoyltransferase catalytic subunit from Listeria monocytogenes serotype 4b (strain F2365).